Consider the following 112-residue polypeptide: DNA-binding protein TON_1102 (112 aa).

It belongs to the PDCD5 family.

The chain is DNA-binding protein TON_1102 from Thermococcus onnurineus (strain NA1).